The primary structure comprises 48 residues: Delta-actitoxin-Bcg1c (48 aa).

3 cysteine pairs are disulfide-bonded: Cys4-Cys45, Cys6-Cys35, and Cys28-Cys46.

It is found in the secreted. Its subcellular location is the nematocyst. Binds specifically to voltage-gated sodium channels SCN1A/Nav1.1, thereby delaying their inactivation during signal transduction. The polypeptide is Delta-actitoxin-Bcg1c (Bunodosoma cangicum (Sea anemone)).